We begin with the raw amino-acid sequence, 265 residues long: Urease accessory protein UreH (265 aa).

It belongs to the UreD family. As to quaternary structure, ureH, UreF and UreG form a complex that acts as a GTP-hydrolysis-dependent molecular chaperone, activating the urease apoprotein by helping to assemble the nickel containing metallocenter of UreC. The UreE protein probably delivers the nickel.

Its subcellular location is the cytoplasm. In terms of biological role, required for maturation of urease via the functional incorporation of the urease nickel metallocenter. The chain is Urease accessory protein UreH from Helicobacter pylori (strain G27).